A 268-amino-acid polypeptide reads, in one-letter code: Octanoyltransferase (268 aa).

A BPL/LPL catalytic domain is found at 47-243 (PETPDQVWLV…ALCEVLAAHE (197 aa)). Residues 87-94 (RGGQITYH), 159-161 (ALG), and 172-174 (GVS) contribute to the substrate site. The active-site Acyl-thioester intermediate is Cys190.

It belongs to the LipB family.

The protein resides in the cytoplasm. It carries out the reaction octanoyl-[ACP] + L-lysyl-[protein] = N(6)-octanoyl-L-lysyl-[protein] + holo-[ACP] + H(+). It functions in the pathway protein modification; protein lipoylation via endogenous pathway; protein N(6)-(lipoyl)lysine from octanoyl-[acyl-carrier-protein]: step 1/2. In terms of biological role, catalyzes the transfer of endogenously produced octanoic acid from octanoyl-acyl-carrier-protein onto the lipoyl domains of lipoate-dependent enzymes. Lipoyl-ACP can also act as a substrate although octanoyl-ACP is likely to be the physiological substrate. The chain is Octanoyltransferase from Cupriavidus necator (strain ATCC 17699 / DSM 428 / KCTC 22496 / NCIMB 10442 / H16 / Stanier 337) (Ralstonia eutropha).